We begin with the raw amino-acid sequence, 341 residues long: Glycerol-3-phosphate dehydrogenase [NAD(P)+] (341 aa).

NADPH contacts are provided by Ser-14, Phe-15, Arg-35, and Lys-108. Residues Lys-108 and Gly-136 each contribute to the sn-glycerol 3-phosphate site. Ala-140 serves as a coordination point for NADPH. 5 residues coordinate sn-glycerol 3-phosphate: Lys-191, Asp-244, Ser-254, Arg-255, and Asn-256. Catalysis depends on Lys-191, which acts as the Proton acceptor. Residue Arg-255 coordinates NADPH. Val-279 and Glu-281 together coordinate NADPH.

The protein belongs to the NAD-dependent glycerol-3-phosphate dehydrogenase family.

It localises to the cytoplasm. It carries out the reaction sn-glycerol 3-phosphate + NAD(+) = dihydroxyacetone phosphate + NADH + H(+). The enzyme catalyses sn-glycerol 3-phosphate + NADP(+) = dihydroxyacetone phosphate + NADPH + H(+). Its pathway is membrane lipid metabolism; glycerophospholipid metabolism. In terms of biological role, catalyzes the reduction of the glycolytic intermediate dihydroxyacetone phosphate (DHAP) to sn-glycerol 3-phosphate (G3P), the key precursor for phospholipid synthesis. This chain is Glycerol-3-phosphate dehydrogenase [NAD(P)+], found in Pseudomonas entomophila (strain L48).